The primary structure comprises 43 residues: Photosystem II reaction center protein Psb30 (43 aa).

The chain crosses the membrane as a helical span at residues 15 to 35 (VIFQLTFVSLILISGPVVIFL).

The protein belongs to the Psb30/Ycf12 family. PSII is composed of 1 copy each of membrane proteins PsbA, PsbB, PsbC, PsbD, PsbE, PsbF, PsbH, PsbI, PsbJ, PsbK, PsbL, PsbM, PsbT, PsbX, PsbY, PsbZ, Psb30/Ycf12, peripheral proteins PsbO, CyanoQ (PsbQ), PsbU, PsbV and a large number of cofactors. It forms dimeric complexes.

It is found in the cellular thylakoid membrane. Functionally, a core subunit of photosystem II (PSII), probably helps stabilize the reaction center. In Picosynechococcus sp. (strain ATCC 27264 / PCC 7002 / PR-6) (Agmenellum quadruplicatum), this protein is Photosystem II reaction center protein Psb30.